The sequence spans 185 residues: MLNDVYAAQKDGCEKAIASLKRDFTTLRTGKVNISILDHVMIDYYGSMTPLNQVATVLASDASTISITPWEKSMIKTISGAIQAANIGVNPNSDGECVKLFFPPMTIEQRQENAKHAKAMGEKAKVSVRNVRKDANDEVKKLEKDKAITEDESKKGQDEVQKITDGYVAKIDALVKEKEAELLKV.

The disordered stretch occupies residues 135–159 (ANDEVKKLEKDKAITEDESKKGQDE).

This sequence belongs to the RRF family.

The protein localises to the cytoplasm. Functionally, responsible for the release of ribosomes from messenger RNA at the termination of protein biosynthesis. May increase the efficiency of translation by recycling ribosomes from one round of translation to another. The sequence is that of Ribosome-recycling factor from Campylobacter curvus (strain 525.92).